We begin with the raw amino-acid sequence, 810 residues long: Lon protease (810 aa).

The region spanning 8–201 is the Lon N-terminal domain; that stretch reads LPLLPLRGIL…KLCGIVAKEL (194 aa). Position 353-360 (353-360) interacts with ATP; it reads GPPGVGKT. Residues 589-770 enclose the Lon proteolytic domain; that stretch reads NDEVGTVTGM…DQVLAIALLE (182 aa). Catalysis depends on residues serine 676 and lysine 719.

Belongs to the peptidase S16 family. Homohexamer. Organized in a ring with a central cavity.

The protein resides in the cytoplasm. The catalysed reaction is Hydrolysis of proteins in presence of ATP.. In terms of biological role, ATP-dependent serine protease that mediates the selective degradation of mutant and abnormal proteins as well as certain short-lived regulatory proteins. Required for cellular homeostasis and for survival from DNA damage and developmental changes induced by stress. Degrades polypeptides processively to yield small peptide fragments that are 5 to 10 amino acids long. Binds to DNA in a double-stranded, site-specific manner. The polypeptide is Lon protease (Desulforamulus reducens (strain ATCC BAA-1160 / DSM 100696 / MI-1) (Desulfotomaculum reducens)).